A 241-amino-acid polypeptide reads, in one-letter code: Phosphoadenosine 5'-phosphosulfate reductase (241 aa).

C235 functions as the Nucleophile; cysteine thiosulfonate intermediate in the catalytic mechanism.

The protein belongs to the PAPS reductase family. CysH subfamily.

Its subcellular location is the cytoplasm. It catalyses the reaction [thioredoxin]-disulfide + sulfite + adenosine 3',5'-bisphosphate + 2 H(+) = [thioredoxin]-dithiol + 3'-phosphoadenylyl sulfate. It functions in the pathway sulfur metabolism; hydrogen sulfide biosynthesis; sulfite from sulfate: step 3/3. In terms of biological role, catalyzes the formation of sulfite from phosphoadenosine 5'-phosphosulfate (PAPS) using thioredoxin as an electron donor. The protein is Phosphoadenosine 5'-phosphosulfate reductase of Xanthomonas axonopodis pv. citri (strain 306).